The following is a 343-amino-acid chain: L-threonine 3-dehydrogenase (343 aa).

Cysteine 40 contributes to the Zn(2+) binding site. Active-site charge relay system residues include threonine 42 and histidine 45. Positions 65, 66, 95, 98, 101, and 109 each coordinate Zn(2+). Residues isoleucine 177, aspartate 197, arginine 202, 264 to 266, and 288 to 289 each bind NAD(+); these read LGI and IY.

This sequence belongs to the zinc-containing alcohol dehydrogenase family. As to quaternary structure, homotetramer. Zn(2+) serves as cofactor.

It is found in the cytoplasm. It carries out the reaction L-threonine + NAD(+) = (2S)-2-amino-3-oxobutanoate + NADH + H(+). The protein operates within amino-acid degradation; L-threonine degradation via oxydo-reductase pathway; glycine from L-threonine: step 1/2. Functionally, catalyzes the NAD(+)-dependent oxidation of L-threonine to 2-amino-3-ketobutyrate. This Vibrio vulnificus (strain YJ016) protein is L-threonine 3-dehydrogenase.